Consider the following 851-residue polypeptide: Venom phosphodiesterase (851 aa).

A signal peptide spans 1–23 (MIQQKVLFISLVAVALGLGLGLG). SMB domains follow at residues 30–73 (PQVS…VLPT) and 74–118 (QSWS…GETS). 16 disulfide bridges follow: C34–C38, C34–C51, C38–C69, C49–C51, C49–C62, C55–C61, C62–C69, C78–C83, C78–C95, C83–C113, C93–C95, C93–C106, C99–C105, C106–C113, C124–C170, and C132–C344. An N-linked (GlcNAc...) asparagine glycan is attached at N39. Positions 58-60 (RQA) match the Cell attachment site motif. D147 and T185 together coordinate a divalent metal cation. T185 (AMP-threonine intermediate) is an active-site residue. N-linked (GlcNAc...) asparagine glycosylation is found at N216, N259, and N270. Position 271 (K271) interacts with AMP. Positions 305, 309, 352, and 353 each coordinate a divalent metal cation. Position 309 (H309) interacts with AMP. 6 disulfides stabilise this stretch: C360-C457, C408-C793, C541-C599, C554-C654, C556-C639, and C762-C772. N405 carries an N-linked (GlcNAc...) asparagine glycan. A divalent metal cation is bound at residue H462. N-linked (GlcNAc...) asparagine glycans are attached at residues N512, N594, and N745.

It belongs to the nucleotide pyrophosphatase/phosphodiesterase family. In terms of assembly, monomer cleaved in two subunits; disulfide-linked. Is synthesized as a single-chain protein and is subsequently cleaved to form a two-subunit protein held together with disulfide bonds. It depends on a divalent metal cation as a cofactor. As to expression, expressed by venom gland.

The protein localises to the secreted. It carries out the reaction ADP + H2O = AMP + phosphate + H(+). In terms of biological role, hydrolyzes ADP with high activity. Shows weak or no activity on 5'-AMP, 5'-GMP, 3'-AMP, ATP, cAMP, and cGMP. Is devoid of monophosphatase and proteinase activities. Dose-dependently inhibits platelet aggregation induced by ADP (IC(50)=0.99 uM) and collagen (IC(50)=1.4 uM). This is Venom phosphodiesterase from Macrovipera lebetinus (Levantine viper).